Reading from the N-terminus, the 357-residue chain is Sorbitol dehydrogenase (357 aa).

At Ala-2 the chain carries N-acetylalanine. Cys-45 is a binding site for Zn(2+). Tyr-51 contacts substrate. His-70 and Glu-71 together coordinate Zn(2+). A substrate-binding site is contributed by Glu-156. NAD(+) is bound by residues Ile-184, Asp-204, and Arg-209. 2 positions are modified to phosphoserine: Ser-211 and Ser-225. NAD(+) contacts are provided by residues 273-275 and 297-299; these read VGL and VFR. Residues Arg-299 and Tyr-300 each coordinate substrate.

This sequence belongs to the zinc-containing alcohol dehydrogenase family. Homotetramer. Zn(2+) serves as cofactor.

The protein resides in the mitochondrion membrane. Its subcellular location is the cell projection. It is found in the cilium. The protein localises to the flagellum. It carries out the reaction xylitol + NAD(+) = D-xylulose + NADH + H(+). The catalysed reaction is L-iditol + NAD(+) = keto-L-sorbose + NADH + H(+). The enzyme catalyses keto-D-fructose + NADH + H(+) = D-sorbitol + NAD(+). Functionally, polyol dehydrogenase that catalyzes the reversible NAD(+)-dependent oxidation of various sugar alcohols. Is active with xylitol, L-iditol and D-sorbitol (D-glucitol) as substrates, leading to the C2-oxidized products D-xylulose, L-sorbose and D-fructose, respectively. Is a key enzyme in the polyol pathway that interconverts glucose and fructose via sorbitol, which constitutes an important alternate route for glucose metabolism. May play a role in sperm motility by using sorbitol as an alternative energy source for sperm motility. The polypeptide is Sorbitol dehydrogenase (SORD) (Macaca fascicularis (Crab-eating macaque)).